We begin with the raw amino-acid sequence, 513 residues long: ATP synthase subunit alpha (513 aa).

Position 169-176 (169-176 (GDRQTGKT)) interacts with ATP.

This sequence belongs to the ATPase alpha/beta chains family. F-type ATPases have 2 components, CF(1) - the catalytic core - and CF(0) - the membrane proton channel. CF(1) has five subunits: alpha(3), beta(3), gamma(1), delta(1), epsilon(1). CF(0) has three main subunits: a(1), b(2) and c(9-12). The alpha and beta chains form an alternating ring which encloses part of the gamma chain. CF(1) is attached to CF(0) by a central stalk formed by the gamma and epsilon chains, while a peripheral stalk is formed by the delta and b chains.

The protein localises to the cell inner membrane. The enzyme catalyses ATP + H2O + 4 H(+)(in) = ADP + phosphate + 5 H(+)(out). Its function is as follows. Produces ATP from ADP in the presence of a proton gradient across the membrane. The alpha chain is a regulatory subunit. This chain is ATP synthase subunit alpha, found in Nitrosomonas europaea (strain ATCC 19718 / CIP 103999 / KCTC 2705 / NBRC 14298).